A 303-amino-acid chain; its full sequence is RELT-like protein 2 (303 aa).

Residues 15–35 traverse the membrane as a helical segment; that stretch reads LYMLFLLVLVFFLMGLVGFMI. Disordered regions lie at residues 47 to 68, 135 to 214, and 249 to 303; these read RTSR…DDVN, CSRS…QPRT, and PCTL…AGGM. Ser-52 carries the post-translational modification Phosphoserine. 2 stretches are compositionally biased toward basic and acidic residues: residues 148–158 and 172–188; these read RSKEGKSRPRP and THIE…DGSP. Residues 194 to 212 show a composition bias toward gly residues; sequence GSGGGQEPGGSQAAGGGQP. The segment covering 274 to 295 has biased composition (polar residues); that stretch reads GLSSQEANGQPTKLDTSGQQES.

The protein belongs to the RELT family. Interacts with RELT, RELL1, OXSR1, PLSCR1 and TRAF2.

Its subcellular location is the cell membrane. Functionally, induces activation of MAPK14/p38 cascade, when overexpressed. Induces apoptosis, when overexpressed. The protein is RELT-like protein 2 (Rell2) of Mus musculus (Mouse).